The sequence spans 204 residues: High frequency lysogenization protein HflD homolog (204 aa).

The protein belongs to the HflD family.

It is found in the cytoplasm. It localises to the cell inner membrane. This Stenotrophomonas maltophilia (strain R551-3) protein is High frequency lysogenization protein HflD homolog.